We begin with the raw amino-acid sequence, 514 residues long: Transmembrane protein 117 (514 aa).

The Cytoplasmic portion of the chain corresponds to 1–15; that stretch reads MGKDFRYYFQHPWSR. A helical membrane pass occupies residues 16 to 36; the sequence is MIVAYLVIFFNFLIFAEDPVS. The Extracellular segment spans residues 37 to 65; that stretch reads HSQTEANVIVVGNCFSFVTNKYPRGVGWR. The helical transmembrane segment at 66-86 threads the bilayer; the sequence is ILKVLLWLLAILIGLIAGKFL. At 87-110 the chain is on the cytoplasmic side; that stretch reads FHQRLFGQLLRLKMFREDHGSWMT. A helical membrane pass occupies residues 111–131; sequence MFFSTILFLFIFSHIYNTILL. Over 132 to 154 the chain is Extracellular; sequence MDGNMGAYLITDYMGIRNESFMK. Residues 155–175 traverse the membrane as a helical segment; sequence LAAVGTWMGDFVTAWMVTDMM. Over 176–198 the chain is Cytoplasmic; it reads LQDKPYPDWGKSARAFWKKGNVR. The chain crosses the membrane as a helical span at residues 199–219; it reads IILFWTVLFTLTSVVVLVITT. Over 220–239 the chain is Extracellular; it reads DWISWDKLNRGFLPSDEVSR. A helical transmembrane segment spans residues 240 to 260; the sequence is AFLASFILVFDLLIVMQDWEF. The Cytoplasmic segment spans residues 261-295; that stretch reads PHFMGDVDVNLPGLHTPHMQFKIPFFQKIFKEEYR. The helical transmembrane segment at 296–316 threads the bilayer; sequence IHITGKWFNYGIIFLVLILDL. Over 317–394 the chain is Extracellular; that stretch reads NMWKNQIFYK…FIGASLDVKC (78 aa). Asparagine 353 and asparagine 371 each carry an N-linked (GlcNAc...) asparagine glycan. Residues 395-415 traverse the membrane as a helical segment; that stretch reads LAFVPSLIAFVWFGFFIWFFG. Over 416 to 514 the chain is Cytoplasmic; the sequence is RFLKNEQGME…PAASQRMRTN (99 aa). Positions 430-450 are disordered; that stretch reads TYTRMKRKSPSEHSKDMGITR. Positions 438-448 are enriched in basic and acidic residues; the sequence is SPSEHSKDMGI. Threonine 453 carries the post-translational modification Phosphothreonine. The tract at residues 494-514 is disordered; sequence ESTSEVEAEQEPAASQRMRTN.

Belongs to the TMEM117 family.

It is found in the cell membrane. Functionally, involved in endoplasmic reticulum (ER) stress-induced cell death pathway. This is Transmembrane protein 117 (Tmem117) from Mus musculus (Mouse).